The primary structure comprises 165 residues: Methylated-DNA--protein-cysteine methyltransferase (165 aa).

Residue Cys-126 is the Nucleophile; methyl group acceptor of the active site.

This sequence belongs to the MGMT family.

The protein resides in the cytoplasm. It catalyses the reaction a 6-O-methyl-2'-deoxyguanosine in DNA + L-cysteinyl-[protein] = S-methyl-L-cysteinyl-[protein] + a 2'-deoxyguanosine in DNA. The enzyme catalyses a 4-O-methyl-thymidine in DNA + L-cysteinyl-[protein] = a thymidine in DNA + S-methyl-L-cysteinyl-[protein]. Involved in the cellular defense against the biological effects of O6-methylguanine (O6-MeG) and O4-methylthymine (O4-MeT) in DNA. Repairs the methylated nucleobase in DNA by stoichiometrically transferring the methyl group to a cysteine residue in the enzyme. This is a suicide reaction: the enzyme is irreversibly inactivated. This is Methylated-DNA--protein-cysteine methyltransferase from Mycobacterium bovis (strain ATCC BAA-935 / AF2122/97).